The primary structure comprises 386 residues: Antilisterial bacteriocin subtilosin biosynthesis protein AlbE (386 aa).

Involved in the production of the bacteriocin subtilosin. The sequence is that of Antilisterial bacteriocin subtilosin biosynthesis protein AlbE (albE) from Bacillus subtilis (strain 168).